Here is a 105-residue protein sequence, read N- to C-terminus: uncharacterized protein (105 aa).

Disordered regions lie at residues 29 to 55 and 72 to 105; these read HTRV…TDES and EQRG…RSGR. Positions 72–81 are enriched in basic and acidic residues; sequence EQRGDRRAVR.

This is an uncharacterized protein from Streptomyces coelicolor (strain ATCC BAA-471 / A3(2) / M145).